The sequence spans 188 residues: MSAREERYQRGSKRPAARRENESDNGSWEQADLGNEERKQKFLRLMGAGKKEHTGRLVIGDHKSTSHFRSGVEDKKISDQLEHQYQQSMDSSMSGRNRRHCGLGFSESETTQEKAPPPPPEHPPERESESESSNEVSSEEESESESVSEEETAADKQKPTKPNEKDSFPDSRDGKSNYKMLFVKSTGS.

Positions 1 to 188 (MSAREERYQR…KMLFVKSTGS (188 aa)) are disordered. A compositionally biased stretch (basic and acidic residues) spans 49-82 (GKKEHTGRLVIGDHKSTSHFRSGVEDKKISDQLE). The span at 83 to 95 (HQYQQSMDSSMSG) shows a compositional bias: polar residues. The span at 130-152 (SESSNEVSSEEESESESVSEEET) shows a compositional bias: acidic residues. Positions 153-176 (AADKQKPTKPNEKDSFPDSRDGKS) are enriched in basic and acidic residues.

It belongs to the SMAP family.

In Xenopus laevis (African clawed frog), this protein is Small acidic protein (smap).